A 391-amino-acid chain; its full sequence is MAKAKFERNKPHVNIGTIGHVDHGKTTLTAAITKYFGDFQAYDQIDGAPEEKARGITISTAHVEYETENRHYAHVDCPGHADYVKNMITGAAQMDGAILVVNAADGPMPQTREHILLGRQVGIPTMVVFMNKVDQVDDEELLELVEMEIRELLSSYDYPGDDIPVIPGSALAAMEGRDPEIGEEAIKKLMAAVDEFIPTPERAIDQPFLMPVEDVFSISGRGTVVTGRVERGVINVGDNIEIVGIKDTQSTTCTGVEMFRKLLDRGEAGDNIGALLRGIDREAVERGQVLCKPGSVKPHTKFEAEAYILTKDEGGRHTPFFANYRPQFYFRTTDVTGTVQLAEGTEMVMPGDNVSFGVELIAPIAMEQGLRFAIREGGRTVGAGVVSKITE.

Residues 10–201 enclose the tr-type G domain; sequence KPHVNIGTIG…AVDEFIPTPE (192 aa). The G1 stretch occupies residues 19–26; the sequence is GHVDHGKT. 19 to 26 is a binding site for GTP; the sequence is GHVDHGKT. Threonine 26 serves as a coordination point for Mg(2+). Positions 55 to 59 are G2; the sequence is GITIS. Residues 76–79 form a G3 region; the sequence is DCPG. Residues 76 to 80 and 131 to 134 contribute to the GTP site; these read DCPGH and NKVD. The tract at residues 131–134 is G4; sequence NKVD. The segment at 169–171 is G5; the sequence is SAL.

It belongs to the TRAFAC class translation factor GTPase superfamily. Classic translation factor GTPase family. EF-Tu/EF-1A subfamily. Monomer.

It localises to the cytoplasm. The enzyme catalyses GTP + H2O = GDP + phosphate + H(+). Functionally, GTP hydrolase that promotes the GTP-dependent binding of aminoacyl-tRNA to the A-site of ribosomes during protein biosynthesis. This chain is Elongation factor Tu, found in Roseobacter denitrificans (strain ATCC 33942 / OCh 114) (Erythrobacter sp. (strain OCh 114)).